We begin with the raw amino-acid sequence, 96 residues long: Tenecin-3 (96 aa).

The N-terminal stretch at 1-18 is a signal peptide; it reads MKTFVICLILVVAVSAAP. A disordered region spans residues 19 to 96; it reads DHHDGHLGGH…HQGGYKTHGH (78 aa). Repeat copies occupy residues 23 to 26, 31 to 34, 35 to 38, 39 to 42, 43 to 46, 47 to 50, 51 to 54, 59 to 62, 63 to 66, 67 to 70, 77 to 80, and 86 to 89. The segment at 23–89 is 12 X 4 AA repeats of G-X-X-G; the sequence is GHLGGHQTGH…GPGTGAGHQG (67 aa). The span at 26–89 shows a compositional bias: gly residues; that stretch reads GGHQTGHQGG…GPGTGAGHQG (64 aa).

The protein to H.diomphalia holotricin 3.

Its subcellular location is the secreted. In terms of biological role, antifungal heat stable protein produced in response to injury. It is active against C.albicans. No antibacterial activity against Gram-positive and Gram-negative bacteria. The polypeptide is Tenecin-3 (Tenebrio molitor (Yellow mealworm beetle)).